The sequence spans 247 residues: ATP synthase subunit a, chloroplastic (247 aa).

5 helical membrane-spanning segments follow: residues 38-58 (QVLI…TVAV), 95-115 (VPFI…GALL), 134-154 (INTT…AGLT), 199-219 (LVVV…VMFL), and 220-240 (GLFT…AYIG).

It belongs to the ATPase A chain family. F-type ATPases have 2 components, CF(1) - the catalytic core - and CF(0) - the membrane proton channel. CF(1) has five subunits: alpha(3), beta(3), gamma(1), delta(1), epsilon(1). CF(0) has four main subunits: a, b, b' and c.

Its subcellular location is the plastid. The protein localises to the chloroplast thylakoid membrane. In terms of biological role, key component of the proton channel; it plays a direct role in the translocation of protons across the membrane. The polypeptide is ATP synthase subunit a, chloroplastic (Platanus occidentalis (Sycamore)).